Reading from the N-terminus, the 512-residue chain is MNSHPLMRLLRSRHTVMKLPSNAIKNDTMLPKIIPAIMAGGRGTRLWPLSRATAAKQFLKLIGEETLFQDTLKRVSDAKVYGAPLVITNEEFRFLVAEQARELGVTLSSIVLEPVPRNTAAAVAVAARIVADRFGEDALLLVLPSDHAITVDDTYKKCVRSACIAAAEGKLVTFGIQPTWPATGYGYIERGTYLGKDVHAVQCFVEKPSLEKAAALLETGNYYWNSGMFLFQAASIIAELEEHAPDVLSAVHAAVRGSTVDADFIRLAPESFSQAPSISIDYALMEKTANAAVVCSDFAWSDLGSWDAVWKNEEQNADGNVLKGNVTACNTKNSLVLSHTAHLAVQGMDGVAVIASEDAVFVGRLEEAHEIGNLVKRLAADENTARLTELHPTLIRPWGGYTTMLNGDRFQVRRLFVRPGKMLSLHKHFHRSEHWICVKGTAEVTIEDRVTILHENQSIYIPEGAIHRLGNPGKIMLELVEIQTGAYLGEDDIIRVADESRNEMPDSRRTGP.

The protein belongs to the mannose-6-phosphate isomerase type 2 family.

It catalyses the reaction alpha-D-mannose 1-phosphate + GTP + H(+) = GDP-alpha-D-mannose + diphosphate. The chain is Mannose-1-phosphate guanylyltransferase (noeJ) from Sinorhizobium fredii (strain NBRC 101917 / NGR234).